Reading from the N-terminus, the 198-residue chain is Fucoxanthin-chlorophyll a-c binding protein B, chloroplastic (198 aa).

The N-terminal 31 residues, 1–31, are a transit peptide targeting the chloroplast; the sequence is MKFTVFASLFASAAAFAPAQQAARTSVATNM. 3 helical membrane-spanning segments follow: residues 73–94, 114–134, and 174–196; these read ISMLAVAGYLAQEAGWRLGGDI, IPQAGLIQIIAFIGFLETSVM, and GRAAQMGILALMVHEQLGVNILP.

The protein belongs to the fucoxanthin chlorophyll protein family. As to quaternary structure, the LHC complex of chromophytic algae is composed of fucoxanthin, chlorophyll A and C bound non-covalently by fucoxanthin chlorophyll proteins (FCPs). The ratio of the pigments in LHC; fucoxanthin: chlorophyll C: chlorophyll A; (0.6-1): (0.1-0.3): (1).

The protein localises to the plastid. The protein resides in the chloroplast thylakoid membrane. Its function is as follows. The light-harvesting complex (LHC) functions as a light receptor, it captures and delivers excitation energy to photosystems with which it is closely associated. Energy is transferred from the carotenoid and chlorophyll C (or B) to chlorophyll A and the photosynthetic reaction centers where it is used to synthesize ATP and reducing power. The protein is Fucoxanthin-chlorophyll a-c binding protein B, chloroplastic (FCPB) of Phaeodactylum tricornutum (Diatom).